A 181-amino-acid chain; its full sequence is Oligoribonuclease (181 aa).

An Exonuclease domain is found at 8-171 (LIWLDLEMTG…DDIKESIAEL (164 aa)). Residue Tyr129 is part of the active site.

This sequence belongs to the oligoribonuclease family.

It localises to the cytoplasm. Functionally, 3'-to-5' exoribonuclease specific for small oligoribonucleotides. The chain is Oligoribonuclease from Colwellia psychrerythraea (strain 34H / ATCC BAA-681) (Vibrio psychroerythus).